Consider the following 299-residue polypeptide: GTPase Era (299 aa).

The Era-type G domain maps to 4–171; the sequence is KSGFVAILGR…MEILKENLDE (168 aa). The segment at 12–19 is G1; that stretch reads GRPNVGKS. Residue 12–19 coordinates GTP; it reads GRPNVGKS. Positions 38-42 are G2; sequence QTTRN. Residues 59-62 are G3; it reads DTPG. Residues 59–63 and 121–124 each bind GTP; these read DTPGI and NKID. The G4 stretch occupies residues 121-124; sequence NKID. Residues 150 to 152 are G5; the sequence is ISA. The 79-residue stretch at 202–280 folds into the KH type-2 domain; the sequence is TREEIPHSVA…FLETWVKVKK (79 aa).

This sequence belongs to the TRAFAC class TrmE-Era-EngA-EngB-Septin-like GTPase superfamily. Era GTPase family. As to quaternary structure, monomer.

Its subcellular location is the cytoplasm. The protein resides in the cell membrane. An essential GTPase that binds both GDP and GTP, with rapid nucleotide exchange. Plays a role in 16S rRNA processing and 30S ribosomal subunit biogenesis and possibly also in cell cycle regulation and energy metabolism. This chain is GTPase Era, found in Streptococcus suis (strain 98HAH33).